The following is a 57-amino-acid chain: Small ribosomal subunit protein bS21 (57 aa).

The disordered stretch occupies residues 35–57; it reads RERYEKPSLRRKRKQEAARKRNR.

It belongs to the bacterial ribosomal protein bS21 family.

The chain is Small ribosomal subunit protein bS21 from Thermosynechococcus vestitus (strain NIES-2133 / IAM M-273 / BP-1).